The primary structure comprises 419 residues: G protein-activated inward rectifier potassium channel 4 (419 aa).

Residues 1 to 86 lie on the Cytoplasmic side of the membrane; the sequence is MAGDSRNAMN…LFTTLVDLKW (86 aa). Phosphoserine is present on S5. A helical transmembrane segment spans residues 87 to 111; sequence RFNLLVFTMVYTITWLFFGFIWWLI. At 112 to 135 the chain is on the extracellular side; the sequence is AYVRGDLDHVGDQEWIPCVENLSG. The segment at residues 136 to 147 is an intramembrane region (helical; Pore-forming); it reads FVSAFLFSIETE. An intramembrane region (pore-forming) is located at residues 148–154; sequence TTIGYGF. Residues 149–154 carry the Selectivity filter motif; the sequence is TIGYGF. The Extracellular segment spans residues 155 to 163; that stretch reads RVITEKCPE. A helical membrane pass occupies residues 164–185; it reads GIILLLVQAILGSIVNAFMVGC. Residues 186 to 419 lie on the Cytoplasmic side of the membrane; it reads MFVKISQPKK…SVSRATRGSM (234 aa). The segment covering 380-390 has biased composition (low complexity); that stretch reads LPSPPLLGGCA. The segment at 380 to 419 is disordered; sequence LPSPPLLGGCAEAEKEAEAEHDEEEEPNGLSVSRATRGSM. The segment covering 409–419 has biased composition (polar residues); that stretch reads LSVSRATRGSM.

It belongs to the inward rectifier-type potassium channel (TC 1.A.2.1) family. KCNJ5 subfamily. As to quaternary structure, associates with KCNJ3/GIRK1 or KCNJ6/GRIK2 to form a G-protein-activated heteromultimer pore-forming unit. The resulting inward current is much larger. Most abundant in heart tissue where it is found predominantly in atria. Also found in brain, kidney, liver, spleen, lung and thymus.

It is found in the membrane. It catalyses the reaction K(+)(in) = K(+)(out). Its activity is regulated as follows. Heteromultimer composed of KCNJ3/GIRK1 and KCNJ5/GIRK4 is activated by phosphatidylinositol 4,5 biphosphate (PtdIns(4,5)P2). Functionally, inward rectifier potassium channels are characterized by a greater tendency to allow potassium to flow into the cell rather than out of it. Their voltage dependence is regulated by the concentration of extracellular potassium; as external potassium is raised, the voltage range of the channel opening shifts to more positive voltages. The inward rectification is mainly due to the blockage of outward current by internal magnesium. Can be blocked by external barium. This potassium channel is controlled by G proteins. The polypeptide is G protein-activated inward rectifier potassium channel 4 (Kcnj5) (Rattus norvegicus (Rat)).